The following is a 119-amino-acid chain: Hemerythrin-like protein (119 aa).

The Fe cation site is built by H26, H56, E60, H75, H79, H107, and D112.

This sequence belongs to the hemerythrin family.

Oxygen-binding protein. The oxygen-binding site contains two iron atoms. The polypeptide is Hemerythrin-like protein (nfa1) (Naegleria fowleri (Brain eating amoeba)).